A 312-amino-acid chain; its full sequence is tRNA pseudouridine synthase B (312 aa).

The active-site Nucleophile is the D48.

Belongs to the pseudouridine synthase TruB family. Type 1 subfamily.

It catalyses the reaction uridine(55) in tRNA = pseudouridine(55) in tRNA. Functionally, responsible for synthesis of pseudouridine from uracil-55 in the psi GC loop of transfer RNAs. This is tRNA pseudouridine synthase B from Haemophilus influenzae (strain ATCC 51907 / DSM 11121 / KW20 / Rd).